The chain runs to 258 residues: Agamous-like MADS-box protein AGL3 (258 aa).

Residues 3 to 57 form the MADS-box domain; the sequence is RGKVELKRIENKINRQVTFAKRRNGLLKKAYELSVLCDAEIALLIFSNRGKLYEF. A K-box domain is found at 88 to 178; that stretch reads LQDKYQDYLK…RRKLEDSDAA (91 aa). Positions 186–214 are disordered; the sequence is SSAAEQQQQHQQQQQGMSSYQSNPPIQEA. Low complexity predominate over residues 191-200; that stretch reads QQQQHQQQQQ. Polar residues predominate over residues 201–210; it reads GMSSYQSNPP.

As to quaternary structure, forms homodimers. Interacts with TT16/AGL32. Expressed in aerial vegetative organs and flowers, but not in roots. Expressed in flower primordia.

The protein resides in the nucleus. Its function is as follows. Probable transcription factor that binds specifically to the CArG box DNA sequence 5'-CC (A/T)6 GG-3'. Plays an important role in the determination of flower meristem identity. Involved in the specification of sepal identity. Contributes to the development of petals, stamens and carpels. The chain is Agamous-like MADS-box protein AGL3 (AGL3) from Arabidopsis thaliana (Mouse-ear cress).